The chain runs to 249 residues: Sugar fermentation stimulation protein homolog (249 aa).

This sequence belongs to the SfsA family.

The sequence is that of Sugar fermentation stimulation protein homolog from Synechococcus sp. (strain RCC307).